The chain runs to 453 residues: Ribulose bisphosphate carboxylase large chain (453 aa).

Positions 1–2 (MS) are excised as a propeptide. Residue P3 is modified to N-acetylproline. K14 is subject to N6,N6,N6-trimethyllysine. Positions 123 and 173 each coordinate substrate. The active-site Proton acceptor is the K175. K177 serves as a coordination point for substrate. Residues K201, D203, and E204 each coordinate Mg(2+). K201 carries the post-translational modification N6-carboxylysine. The active-site Proton acceptor is the H294. 3 residues coordinate substrate: R295, H327, and S379.

Belongs to the RuBisCO large chain family. Type I subfamily. As to quaternary structure, heterohexadecamer of 8 large chains and 8 small chains; disulfide-linked. The disulfide link is formed within the large subunit homodimers. The cofactor is Mg(2+). The disulfide bond which can form in the large chain dimeric partners within the hexadecamer appears to be associated with oxidative stress and protein turnover.

The protein localises to the plastid. It localises to the chloroplast. The enzyme catalyses 2 (2R)-3-phosphoglycerate + 2 H(+) = D-ribulose 1,5-bisphosphate + CO2 + H2O. It catalyses the reaction D-ribulose 1,5-bisphosphate + O2 = 2-phosphoglycolate + (2R)-3-phosphoglycerate + 2 H(+). RuBisCO catalyzes two reactions: the carboxylation of D-ribulose 1,5-bisphosphate, the primary event in carbon dioxide fixation, as well as the oxidative fragmentation of the pentose substrate in the photorespiration process. Both reactions occur simultaneously and in competition at the same active site. In Galium aparine (Catchweed bedstraw), this protein is Ribulose bisphosphate carboxylase large chain.